An 854-amino-acid polypeptide reads, in one-letter code: DNA gyrase subunit A (854 aa).

The Topo IIA-type catalytic domain occupies 42–510 (LPEVRDGLKP…ADGQVSDEDL (469 aa)). Y129 serves as the catalytic O-(5'-phospho-DNA)-tyrosine intermediate. The GyrA-box signature appears at 537 to 543 (QKRGGKG).

Belongs to the type II topoisomerase GyrA/ParC subunit family. As to quaternary structure, heterotetramer, composed of two GyrA and two GyrB chains. In the heterotetramer, GyrA contains the active site tyrosine that forms a transient covalent intermediate with DNA, while GyrB binds cofactors and catalyzes ATP hydrolysis.

Its subcellular location is the cytoplasm. The catalysed reaction is ATP-dependent breakage, passage and rejoining of double-stranded DNA.. With respect to regulation, DNA supercoiling is inhibited by the coumarin antibiotic novobiocin. Also inhibited by the fluoroquinolones ciprofloxacin and moxifloxacin. Functionally, a type II topoisomerase that negatively supercoils closed circular double-stranded (ds) DNA in an ATP-dependent manner to modulate DNA topology and maintain chromosomes in an underwound state; also catalyzes the interconversion of other topological isomers of double-stranded DNA rings, including catenanes. At comparable concentrations has a stronger decatenation activity than E.coli, which is inhibited by ciprofloxacin and novobiocin. Cleaves dsDNA at the sequence 5'-AT/GGCC-3', leaving a 4 base overhang. Relaxes negatively supercoiled DNA in an ATP-independent manner. Negative supercoiling favors strand separation, and DNA replication, transcription, recombination and repair, all of which involve strand separation. Type II topoisomerases break and join 2 DNA strands simultaneously in an ATP-dependent manner. The polypeptide is DNA gyrase subunit A (Mycolicibacterium smegmatis (Mycobacterium smegmatis)).